A 201-amino-acid polypeptide reads, in one-letter code: Glycerol-3-phosphate acyltransferase (201 aa).

The next 5 membrane-spanning stretches (helical) occupy residues 5–25 (LLGA…FGVV), 55–75 (KMGV…ILLA), 88–108 (WSTA…WLGF), 118–138 (LGIF…GYAV), and 164–184 (TYGV…LIFL).

Belongs to the PlsY family. As to quaternary structure, probably interacts with PlsX.

It localises to the cell inner membrane. The enzyme catalyses an acyl phosphate + sn-glycerol 3-phosphate = a 1-acyl-sn-glycero-3-phosphate + phosphate. The protein operates within lipid metabolism; phospholipid metabolism. Its function is as follows. Catalyzes the transfer of an acyl group from acyl-phosphate (acyl-PO(4)) to glycerol-3-phosphate (G3P) to form lysophosphatidic acid (LPA). This enzyme utilizes acyl-phosphate as fatty acyl donor, but not acyl-CoA or acyl-ACP. The sequence is that of Glycerol-3-phosphate acyltransferase from Anaeromyxobacter dehalogenans (strain 2CP-C).